Consider the following 1330-residue polypeptide: ESX-3 secretion system protein EccC3 (1330 aa).

The next 2 membrane-spanning stretches (helical) occupy residues L43 to M63 and V65 to Y85. FtsK domains lie at G456–R662, R811–N1000, and L1090–G1280. Residues G479–S486, G829–S836, and G1107–T1114 each bind ATP.

Part of the ESX-3 / type VII secretion system (T7SS), which is composed of cytosolic and membrane components. The ESX-3 membrane complex is composed of EccB3, EccC3, EccD3 and EccE3.

It localises to the cell inner membrane. In terms of biological role, part of the ESX-3 specialized secretion system, which is important for iron and zinc uptake or homeostasis. This chain is ESX-3 secretion system protein EccC3, found in Mycobacterium tuberculosis (strain CDC 1551 / Oshkosh).